A 99-amino-acid chain; its full sequence is Co-chaperonin GroES (99 aa).

This sequence belongs to the GroES chaperonin family. Heptamer of 7 subunits arranged in a ring. Interacts with the chaperonin GroEL.

It localises to the cytoplasm. Together with the chaperonin GroEL, plays an essential role in assisting protein folding. The GroEL-GroES system forms a nano-cage that allows encapsulation of the non-native substrate proteins and provides a physical environment optimized to promote and accelerate protein folding. GroES binds to the apical surface of the GroEL ring, thereby capping the opening of the GroEL channel. The protein is Co-chaperonin GroES of Corynebacterium efficiens (strain DSM 44549 / YS-314 / AJ 12310 / JCM 11189 / NBRC 100395).